The sequence spans 511 residues: ATP synthase subunit alpha 1 (511 aa).

Position 174–181 (174–181) interacts with ATP; that stretch reads GDRQTGKT.

It belongs to the ATPase alpha/beta chains family. In terms of assembly, F-type ATPases have 2 components, CF(1) - the catalytic core - and CF(0) - the membrane proton channel. CF(1) has five subunits: alpha(3), beta(3), gamma(1), delta(1), epsilon(1). CF(0) has four main subunits: a(1), b(1), b'(1) and c(9-12).

The protein resides in the cell inner membrane. The catalysed reaction is ATP + H2O + 4 H(+)(in) = ADP + phosphate + 5 H(+)(out). Produces ATP from ADP in the presence of a proton gradient across the membrane. The alpha chain is a regulatory subunit. This chain is ATP synthase subunit alpha 1, found in Chlorobium luteolum (strain DSM 273 / BCRC 81028 / 2530) (Pelodictyon luteolum).